We begin with the raw amino-acid sequence, 830 residues long: Ribosome biogenesis protein ERB1 (830 aa).

Residues 1–141 (MAPQPLKVGT…ENKDLPVDEK (141 aa)) form a disordered region. 2 stretches are compositionally biased toward acidic residues: residues 35-44 (VSEESDEEFG) and 52-109 (MSDD…DSDS). Basic and acidic residues predominate over residues 131 to 141 (EENKDLPVDEK). WD repeat units follow at residues 481 to 520 (PGDT…EVWR), 523 to 563 (LHAG…APHI), 660 to 698 (KTPG…LIRT), 701 to 740 (SGVK…KPYK), 744 to 783 (YHNR…DLMQ), and 799 to 830 (IDGI…LWCS).

It belongs to the WD repeat BOP1/ERB1 family. As to quaternary structure, component of the NOP7 complex, composed of ERB1, NOP7 and YTM1. The complex is held together by ERB1, which interacts with NOP7 via its N-terminal domain and with YTM1 via a high-affinity interaction between the seven-bladed beta-propeller domains of the 2 proteins. The NOP7 complex associates with the 66S pre-ribosome.

Its subcellular location is the nucleus. The protein resides in the nucleolus. It localises to the nucleoplasm. Component of the NOP7 complex, which is required for maturation of the 25S and 5.8S ribosomal RNAs and formation of the 60S ribosome. The sequence is that of Ribosome biogenesis protein ERB1 from Cryptococcus neoformans var. neoformans serotype D (strain B-3501A) (Filobasidiella neoformans).